The primary structure comprises 385 residues: S-adenosylmethionine synthase (385 aa).

Residue H16 coordinates ATP. D18 contributes to the Mg(2+) binding site. A K(+)-binding site is contributed by E44. Residues E57 and Q100 each contribute to the L-methionine site. The interval 100–110 is flexible loop; it reads QSPDINQGVDR. ATP is bound by residues 164–166, 230–231, D239, 245–246, A262, and K266; these read DGK, KF, and RK. Residue D239 coordinates L-methionine. K270 serves as a coordination point for L-methionine.

Belongs to the AdoMet synthase family. As to quaternary structure, homotetramer; dimer of dimers. Requires Mg(2+) as cofactor. K(+) is required as a cofactor.

It is found in the cytoplasm. It catalyses the reaction L-methionine + ATP + H2O = S-adenosyl-L-methionine + phosphate + diphosphate. It functions in the pathway amino-acid biosynthesis; S-adenosyl-L-methionine biosynthesis; S-adenosyl-L-methionine from L-methionine: step 1/1. Its function is as follows. Catalyzes the formation of S-adenosylmethionine (AdoMet) from methionine and ATP. The overall synthetic reaction is composed of two sequential steps, AdoMet formation and the subsequent tripolyphosphate hydrolysis which occurs prior to release of AdoMet from the enzyme. This is S-adenosylmethionine synthase from Helicobacter pylori (strain J99 / ATCC 700824) (Campylobacter pylori J99).